A 47-amino-acid polypeptide reads, in one-letter code: Protein YqgG (47 aa).

The polypeptide is Protein YqgG (Escherichia coli (strain K12)).